A 97-amino-acid chain; its full sequence is Large ribosomal subunit protein bL21 (97 aa).

This sequence belongs to the bacterial ribosomal protein bL21 family. As to quaternary structure, part of the 50S ribosomal subunit. Contacts protein L20.

In terms of biological role, this protein binds to 23S rRNA in the presence of protein L20. The polypeptide is Large ribosomal subunit protein bL21 (Persephonella marina (strain DSM 14350 / EX-H1)).